Consider the following 196-residue polypeptide: dTTP/UTP pyrophosphatase (196 aa).

Aspartate 75 serves as the catalytic Proton acceptor.

This sequence belongs to the Maf family. YhdE subfamily. The cofactor is a divalent metal cation.

It is found in the cytoplasm. It carries out the reaction dTTP + H2O = dTMP + diphosphate + H(+). The catalysed reaction is UTP + H2O = UMP + diphosphate + H(+). Its function is as follows. Nucleoside triphosphate pyrophosphatase that hydrolyzes dTTP and UTP. May have a dual role in cell division arrest and in preventing the incorporation of modified nucleotides into cellular nucleic acids. This Wolbachia pipientis subsp. Culex pipiens (strain wPip) protein is dTTP/UTP pyrophosphatase.